The primary structure comprises 574 residues: MKRSLQALYCQLLSFLLTLALTKALVLAVHEPSPRESLQTLPSGSPPGTMVTAPHSPTRLSSVLTLNPTPDGPSSQAAATLETTVSHPEGHPPTDTTSTVMGTAAVPHPESPLPTGSPPAAMTTTPSHSESLPPGDATPTTTLPTKPAGTTSRPTVAPRATTRRPPRPPGSSRKGAGGSTRTLTPVPGGHLARKESQRGRNQSSAHLGPKRPLGKIFQIYKGNFTGSAEPDPSALTPRTPLGGYFSSTQPQTVSPATAPRSTSRVPPTTSLVPVKDKPGFIRSNQGSGPILTSPGGEPAATAATGAPASTQPAPVPSQSPHGDVQDSASHSDSWLAVTPDTDRPTSASSGVFTAATGPTQAAFDATVSAPSPGIPQGPSATPQAPTRPSGVSESTVSPAEEEAEASPTTTDRGPRPLSTVLSTATGNFLNRLVPAGTWKPGTVANISHVAEGDKPQHRATICLSKMDIAWVIVAISVPISSCSVLLTVCCMRRKKKTANPENNLSYWNNAITMDYFNRHAVELPREIQSLETSEDQLSEPRSPANGDYRDTGMVLVNPFCQETLFVGNDQVSEI.

The helical transmembrane segment at 9–29 (YCQLLSFLLTLALTKALVLAV) threads the bilayer. The tract at residues 31 to 169 (EPSPRESLQT…ATTRRPPRPP (139 aa)) is interaction with SH3GL2. 2 disordered regions span residues 32–352 (PSPR…SGVF) and 364–417 (DATV…PRPL). Residues 58-86 (TRLSSVLTLNPTPDGPSSQAAATLETTVS) show a composition bias toward polar residues. Residues 132–160 (LPPGDATPTTTLPTKPAGTTSRPTVAPRA) show a composition bias toward low complexity. Positions 173–406 (RKGAGGSTRT…SPAEEEAEAS (234 aa)) are interaction with DST (isoform 1). The segment covering 245–271 (FSSTQPQTVSPATAPRSTSRVPPTTSL) has biased composition (polar residues). The segment covering 292 to 312 (TSPGGEPAATAATGAPASTQP) has biased composition (low complexity). Positions 316-332 (PSQSPHGDVQDSASHSD) are enriched in polar residues. The helical transmembrane segment at 468 to 488 (IAWVIVAISVPISSCSVLLTV) threads the bilayer. Residues 489–574 (CCMRRKKKTA…FVGNDQVSEI (86 aa)) are interaction with CYFIP2.

As to quaternary structure, interacts with DST (isoform 1). Interacts with SH3GL2. Interacts (via N-terminus) with CYFIP1 and CYFIP2; the interactions associate TMEM108 with the WAVE1 complex. Post-translationally, glycosylated. In terms of tissue distribution, expressed in the nervous system tissues, such as hippocampus and spinal cord, is barely detectable in peripheral tissues such as heart, lung, liver, kidney and muscle. In brain, highly expressed in dentate gyrus neurons and expressed in cortex, olfactory bulb, ammon's horn, cerebellum, hypothalamus and striatum.

The protein resides in the membrane. The protein localises to the postsynaptic density. It is found in the endosome membrane. Its subcellular location is the cell projection. It localises to the axon. The protein resides in the dendrite. The protein localises to the early endosome. Functionally, transmembrane protein required for proper cognitive functions. Involved in the development of dentate gyrus (DG) neuron circuitry, is necessary for AMPA receptors surface expression and proper excitatory postsynaptic currents of DG granule neurons. Regulates the organization and stability of the microtubule network of sensory neurons to allow axonal transport. Through the interaction with DST, mediates the docking of the dynein/dynactin motor complex to vesicle cargos for retrograde axonal transport. In hippocampal neurons, required for BDNF-dependent dendrite outgrowth. Cooperates with SH3GL2 and recruits the WAVE1 complex to facilitate actin-dependent BDNF:NTRK2 early endocytic trafficking and mediate signaling from early endosomes. The protein is Transmembrane protein 108 of Mus musculus (Mouse).